We begin with the raw amino-acid sequence, 92 residues long: Small ribosomal subunit protein uS19 (92 aa).

Belongs to the universal ribosomal protein uS19 family.

Its function is as follows. Protein S19 forms a complex with S13 that binds strongly to the 16S ribosomal RNA. The sequence is that of Small ribosomal subunit protein uS19 from Sulfurovum sp. (strain NBC37-1).